The sequence spans 196 residues: ATP-dependent Clp protease proteolytic subunit (196 aa).

Serine 101 serves as the catalytic Nucleophile. Residue histidine 126 is part of the active site.

It belongs to the peptidase S14 family. As to quaternary structure, component of the chloroplastic Clp protease core complex.

It localises to the plastid. Its subcellular location is the chloroplast stroma. The catalysed reaction is Hydrolysis of proteins to small peptides in the presence of ATP and magnesium. alpha-casein is the usual test substrate. In the absence of ATP, only oligopeptides shorter than five residues are hydrolyzed (such as succinyl-Leu-Tyr-|-NHMec, and Leu-Tyr-Leu-|-Tyr-Trp, in which cleavage of the -Tyr-|-Leu- and -Tyr-|-Trp bonds also occurs).. Functionally, cleaves peptides in various proteins in a process that requires ATP hydrolysis. Has a chymotrypsin-like activity. Plays a major role in the degradation of misfolded proteins. The chain is ATP-dependent Clp protease proteolytic subunit from Nicotiana tabacum (Common tobacco).